The primary structure comprises 513 residues: MTSYMLGIDIGTTSTKAVLFSEKGDVIQKESIGYALYTPDISTAEQNPDEIFQAVIQSTAKIMQQHPDKQPSFISFSSAMHSVIAMDENDKPLTSCITWADNRSEGWAHKIKEEMNGHNVYKRTGTPIHPMAPLSKITWIVNEHPEIAVKAKKYIGIKEYIFKKLFDQYVVDYSLASAMGMMNLKTLAWDEEALAIAGITPDHLSKLVPTTAIFHHCNPELAAMMGIDPQTPFVIGASDGVLSNLGVNAIKKGEIAVTIGTSGAIRPIIDKPQTDEKGRIFCYALTENHWVIGGPVNNGGIVLRWIRDEFASSEIETAKRLGIDPYDVLTKIAERVRPGADGLLFHPYLAGERAPLWNPDVPGSFFGLTMSHKKEHMIRAALEGVIYNLYTVFLALTECMDGPVARIQATGGFARSDVWRQMMADIFESEVVVPESYESSCLGACILGLYATGKIDSFDVVSDMIGSTHRHAPKEESAKEYRKLMPLFINLSRALENEYTQIANYQRSLSSKK.

Residues K16, T261, G300, and G412–S416 contribute to the ATP site.

Belongs to the FGGY kinase family.

The catalysed reaction is D-gluconate + ATP = 6-phospho-D-gluconate + ADP + H(+). It functions in the pathway carbohydrate acid metabolism; D-gluconate degradation. With respect to regulation, catabolite repression by gluconate. This is Gluconokinase (gntK) from Bacillus licheniformis.